We begin with the raw amino-acid sequence, 146 residues long: Putative ankyrin repeat protein FPV224 (146 aa).

4 ANK repeats span residues 9–38 (SLST…DASI), 42–79 (KGIT…TRDI), 94–126 (YVFV…RIDE), and 127–145 (YYYS…KAVN).

This Fowlpox virus (strain NVSL) (FPV) protein is Putative ankyrin repeat protein FPV224.